Here is a 185-residue protein sequence, read N- to C-terminus: Large ribosomal subunit protein uL5 (185 aa).

The protein belongs to the universal ribosomal protein uL5 family. In terms of assembly, part of the 50S ribosomal subunit; part of the 5S rRNA/L5/L18/L25 subcomplex. Contacts the 5S rRNA and the P site tRNA. Forms a bridge to the 30S subunit in the 70S ribosome.

Functionally, this is one of the proteins that bind and probably mediate the attachment of the 5S RNA into the large ribosomal subunit, where it forms part of the central protuberance. In the 70S ribosome it contacts protein S13 of the 30S subunit (bridge B1b), connecting the 2 subunits; this bridge is implicated in subunit movement. Contacts the P site tRNA; the 5S rRNA and some of its associated proteins might help stabilize positioning of ribosome-bound tRNAs. The sequence is that of Large ribosomal subunit protein uL5 from Brucella abortus (strain S19).